A 96-amino-acid chain; its full sequence is Protein Vpr (96 aa).

Residues 1 to 42 (MEQAPEDQGPQREPYHEWTLELLEELKNEAVRHFPRPWLHGL) form a homooligomerization region. A phosphoserine; by host mark is found at Ser-79, Ser-94, and Ser-96.

This sequence belongs to the HIV-1 VPR protein family. In terms of assembly, homooligomer, may form homodimer. Interacts with p6-gag region of the Pr55 Gag precursor protein through a (Leu-X-X)4 motif near the C-terminus of the P6gag protein. Interacts with host UNG. May interact with host RAD23A/HHR23A. Interacts with host VPRBP/DCAF1, leading to hijack the CUL4A-RBX1-DDB1-DCAF1/VPRBP complex, mediating ubiquitination of host proteins such as TERT and ZGPAT and arrest of the cell cycle in G2 phase. In terms of processing, phosphorylated on several residues by host. These phosphorylations regulate VPR activity for the nuclear import of the HIV-1 pre-integration complex.

It localises to the virion. Its subcellular location is the host nucleus. The protein resides in the host extracellular space. In terms of biological role, during virus replication, may deplete host UNG protein, and incude G2-M cell cycle arrest. Acts by targeting specific host proteins for degradation by the 26S proteasome, through association with the cellular CUL4A-DDB1 E3 ligase complex by direct interaction with host VPRPB/DCAF-1. Cell cycle arrest reportedly occurs within hours of infection and is not blocked by antiviral agents, suggesting that it is initiated by the VPR carried into the virion. Additionally, VPR induces apoptosis in a cell cycle dependent manner suggesting that these two effects are mechanistically linked. Detected in the serum and cerebrospinal fluid of AIDS patient, VPR may also induce cell death to bystander cells. During virus entry, plays a role in the transport of the viral pre-integration (PIC) complex to the host nucleus. This function is crucial for viral infection of non-dividing macrophages. May act directly at the nuclear pore complex, by binding nucleoporins phenylalanine-glycine (FG)-repeat regions. This Homo sapiens (Human) protein is Protein Vpr.